We begin with the raw amino-acid sequence, 461 residues long: L-seryl-tRNA(Sec) selenium transferase (461 aa).

Position 291 is an N6-(pyridoxal phosphate)lysine (K291).

This sequence belongs to the SelA family. Pyridoxal 5'-phosphate is required as a cofactor.

The protein resides in the cytoplasm. It catalyses the reaction L-seryl-tRNA(Sec) + selenophosphate + H(+) = L-selenocysteinyl-tRNA(Sec) + phosphate. It participates in aminoacyl-tRNA biosynthesis; selenocysteinyl-tRNA(Sec) biosynthesis; selenocysteinyl-tRNA(Sec) from L-seryl-tRNA(Sec) (bacterial route): step 1/1. Functionally, converts seryl-tRNA(Sec) to selenocysteinyl-tRNA(Sec) required for selenoprotein biosynthesis. The protein is L-seryl-tRNA(Sec) selenium transferase of Caldanaerobacter subterraneus subsp. tengcongensis (strain DSM 15242 / JCM 11007 / NBRC 100824 / MB4) (Thermoanaerobacter tengcongensis).